We begin with the raw amino-acid sequence, 375 residues long: Putative glutamate--cysteine ligase 2 (375 aa).

The protein belongs to the glutamate--cysteine ligase type 2 family. YbdK subfamily.

It catalyses the reaction L-cysteine + L-glutamate + ATP = gamma-L-glutamyl-L-cysteine + ADP + phosphate + H(+). In terms of biological role, ATP-dependent carboxylate-amine ligase which exhibits weak glutamate--cysteine ligase activity. The sequence is that of Putative glutamate--cysteine ligase 2 from Sorangium cellulosum (strain So ce56) (Polyangium cellulosum (strain So ce56)).